We begin with the raw amino-acid sequence, 207 residues long: Holliday junction resolvase RecU (207 aa).

Residues 1 to 21 are disordered; sequence MTIRYPNGQVYRQPGPTKSKS. Residues Thr-87, Asp-89, Glu-102, and Gln-121 each coordinate Mg(2+).

Belongs to the RecU family. The cofactor is Mg(2+).

The protein resides in the cytoplasm. The catalysed reaction is Endonucleolytic cleavage at a junction such as a reciprocal single-stranded crossover between two homologous DNA duplexes (Holliday junction).. Its function is as follows. Endonuclease that resolves Holliday junction intermediates in genetic recombination. Cleaves mobile four-strand junctions by introducing symmetrical nicks in paired strands. Promotes annealing of linear ssDNA with homologous dsDNA. Required for DNA repair, homologous recombination and chromosome segregation. This Lactiplantibacillus plantarum (strain ATCC BAA-793 / NCIMB 8826 / WCFS1) (Lactobacillus plantarum) protein is Holliday junction resolvase RecU.